The primary structure comprises 234 residues: Lipoprotein-releasing system ATP-binding protein LolD (234 aa).

In terms of domain architecture, ABC transporter spans 13 to 233 (IYLHEIKRQY…SLSDGQVVEL (221 aa)). An ATP-binding site is contributed by 49-56 (APSGSGKS).

This sequence belongs to the ABC transporter superfamily. Lipoprotein translocase (TC 3.A.1.125) family. The complex is composed of two ATP-binding proteins (LolD) and two transmembrane proteins (LolC and LolE).

Its subcellular location is the cell inner membrane. Part of the ABC transporter complex LolCDE involved in the translocation of mature outer membrane-directed lipoproteins, from the inner membrane to the periplasmic chaperone, LolA. Responsible for the formation of the LolA-lipoprotein complex in an ATP-dependent manner. The protein is Lipoprotein-releasing system ATP-binding protein LolD of Bradyrhizobium diazoefficiens (strain JCM 10833 / BCRC 13528 / IAM 13628 / NBRC 14792 / USDA 110).